A 577-amino-acid polypeptide reads, in one-letter code: uncharacterized protein (577 aa).

Polar residues-rich tracts occupy residues 1 to 21 and 68 to 87; these read MSSTPTAEELALQNTVSQSAS and SFQNLTPVNSNPSNQNSKTE. 2 disordered regions span residues 1–24 and 68–93; these read MSSTPTAEELALQNTVSQSASAHP and SFQNLTPVNSNPSNQNSKTEPNPDDV. A run of 12 helical transmembrane segments spans residues 139–159, 174–194, 204–224, 232–252, 262–282, 292–312, 367–387, 402–422, 447–467, 473–493, 504–526, and 543–563; these read CILAYVALCSSFASSVFAVPA, LLTMTVFLLGYCSGPIIWAPL, ILIGMLGFGIFNISVAVGKDI, FFAGFFASAPLTVVAAALADM, ITLFSAMVFDGPLVSPIVGGF, WTEYITSFMGFFALIIVYLFC, PICFLITLYSSFVYAILYLLL, MGVAELPYIGLLVGVFIGSGI, LPPMMIGCFMFPAGIFWLSWS, VNWVVPALSGLATGCGILLIF, YLFRAASAIAANTIMRSAMAAGF, and GSLLGFIATALIPMPFVFFFF.

It belongs to the major facilitator superfamily. CAR1 family.

It localises to the endoplasmic reticulum. The protein localises to the membrane. This is an uncharacterized protein from Schizosaccharomyces pombe (strain 972 / ATCC 24843) (Fission yeast).